We begin with the raw amino-acid sequence, 145 residues long: 3-dehydroquinate dehydratase (145 aa).

Catalysis depends on Tyr23, which acts as the Proton acceptor. Positions 74, 80, and 87 each coordinate substrate. His100 acts as the Proton donor in catalysis. Substrate-binding positions include 101–102 and Arg111; that span reads LS.

This sequence belongs to the type-II 3-dehydroquinase family. As to quaternary structure, homododecamer.

It carries out the reaction 3-dehydroquinate = 3-dehydroshikimate + H2O. The protein operates within metabolic intermediate biosynthesis; chorismate biosynthesis; chorismate from D-erythrose 4-phosphate and phosphoenolpyruvate: step 3/7. In terms of biological role, catalyzes a trans-dehydration via an enolate intermediate. The chain is 3-dehydroquinate dehydratase from Bacillus licheniformis (strain ATCC 14580 / DSM 13 / JCM 2505 / CCUG 7422 / NBRC 12200 / NCIMB 9375 / NCTC 10341 / NRRL NRS-1264 / Gibson 46).